The following is a 219-amino-acid chain: Flagellar L-ring protein (219 aa).

The N-terminal stretch at 1-14 (MKRLVLISLVLAAG) is a signal peptide. Cys15 carries N-palmitoyl cysteine lipidation. Cys15 carries S-diacylglycerol cysteine lipidation.

This sequence belongs to the FlgH family. As to quaternary structure, the basal body constitutes a major portion of the flagellar organelle and consists of four rings (L,P,S, and M) mounted on a central rod.

The protein resides in the cell outer membrane. It is found in the bacterial flagellum basal body. Assembles around the rod to form the L-ring and probably protects the motor/basal body from shearing forces during rotation. This is Flagellar L-ring protein from Dechloromonas aromatica (strain RCB).